Here is a 166-residue protein sequence, read N- to C-terminus: Keratin, type II cytoskeletal 68 kDa, component IB (166 aa).

Positions 1–41 constitute an IF rod domain; sequence EAKDDLARLLRDYQDAMNVKLALDVEIATYRKLLEGEECRM. The segment at 1 to 41 is coil 2B; sequence EAKDDLARLLRDYQDAMNVKLALDVEIATYRKLLEGEECRM. Residues 42-166 form a tail region; that stretch reads SGECPSAVSI…FSQSSQRTSR (125 aa). Gly residues predominate over residues 122–146; that stretch reads GFGGGSSGFGSGSGGRSGVSGGGLS. The interval 122 to 166 is disordered; the sequence is GFGGGSSGFGSGSGGRSGVSGGGLSSGSSRGGSVRFSQSSQRTSR. The segment covering 147 to 166 has biased composition (low complexity); that stretch reads SGSSRGGSVRFSQSSQRTSR.

Belongs to the intermediate filament family. As to quaternary structure, heterotetramer of two type I and two type II keratins.

The polypeptide is Keratin, type II cytoskeletal 68 kDa, component IB (Bos taurus (Bovine)).